The following is a 318-amino-acid chain: Vomeronasal type-1 receptor A11 (318 aa).

Residues 1-32 (MSEILFFSPQPLFSHMMNKNSRLHTHSNIKNT) lie on the Extracellular side of the membrane. Residues 33–53 (FFSEIGIGISGNSFLLLFHIL) form a helical membrane-spanning segment. Topologically, residues 54–65 (KFIRGHRPRLTD) are cytoplasmic. Residues 66-86 (LPIGLLSLIHLLMLLLMAFIA) form a helical membrane-spanning segment. The Extracellular portion of the chain corresponds to 87 to 101 (TDIFISRRGWDGIIC). C101 and C188 are joined by a disulfide. The helical transmembrane segment at 102 to 118 (KFLVYLYGVLRGLSLCT) threads the bilayer. At 119 to 147 (TSMLSVLQAIILSPRSSCLAKLKHKSPHH) the chain is on the cytoplasmic side. The chain crosses the membrane as a helical span at residues 148 to 168 (ISCAIIFLSVLYMLISSHILL). The Extracellular portion of the chain corresponds to 169–206 (SITATPNLTMNDFLYVSQSCSLLPLSYLVQSMYSTLLA). A glycan (N-linked (GlcNAc...) asparagine) is linked at N175. Residues 207 to 227 (LREVFLISLMVLSTLYMVVLL) traverse the membrane as a helical segment. Residues 228–254 (CRHRKQAQHLQGTSLSPKASAEQRATQ) lie on the Cytoplasmic side of the membrane. The chain crosses the membrane as a helical span at residues 255-275 (TILMLMTFFVLMSIFDSIVSC). The Extracellular portion of the chain corresponds to 276–285 (SRTMFLDDPT). Residues 286–306 (SYSIHIFVMHIYATVSPFVFM) form a helical membrane-spanning segment. At 307–318 (STEKHIVNILRG) the chain is on the cytoplasmic side.

This sequence belongs to the G-protein coupled receptor 1 family.

It localises to the cell membrane. Its function is as follows. Putative pheromone receptor implicated in the regulation of social and reproductive behavior. The chain is Vomeronasal type-1 receptor A11 from Mus musculus (Mouse).